The sequence spans 486 residues: Ribosome biogenesis protein YTM1 (486 aa).

The ubiquitin-like (UBL) domain stretch occupies residues 12 to 99 (RQLPINLFTR…ESQIDVEYVR (88 aa)). WD repeat units follow at residues 212–251 (GHTG…PTEH), 305–345 (GHTG…AGAL), 349–388 (PFDK…SLIS), 392–432 (PTTS…TALF), and 454–486 (VLGE…ARGE). The segment at 249 to 299 (TEHQVPADPVSYLPGQGTKKRRKLEKDQEKAPIEGLTDGDATGEGGWRRAP) is disordered.

The protein belongs to the WD repeat WDR12/YTM1 family. In terms of assembly, component of the NOP7 complex, composed of ERB1, NOP7 and YTM1. The complex is held together by ERB1, which interacts with NOP7 via its N-terminal domain and with YTM1 via a high-affinity interaction between the seven-bladed beta-propeller domains of the 2 proteins. The NOP7 complex associates with the 66S pre-ribosome. Interacts (via UBL domain) with MDN1 (via VWFA/MIDAS domain).

It is found in the nucleus. The protein resides in the nucleolus. It localises to the nucleoplasm. Component of the NOP7 complex, which is required for maturation of the 25S and 5.8S ribosomal RNAs and formation of the 60S ribosome. The chain is Ribosome biogenesis protein YTM1 from Cryptococcus neoformans var. neoformans serotype D (strain B-3501A) (Filobasidiella neoformans).